A 380-amino-acid chain; its full sequence is Cytochrome b (380 aa).

Helical transmembrane passes span 33-53, 77-98, 113-133, and 178-198; these read FGSLLGLCLIAQILTGLFLAM, WLIRNLHANGASFFFICLYLHV, WNIGVVLLLLVMMTAFVGYVL, and FFAFHFLFPFIIAAMVLLHLL. The heme b site is built by His83 and His97. Positions 182 and 196 each coordinate heme b. His201 provides a ligand contact to a ubiquinone. 4 consecutive transmembrane segments (helical) span residues 226–246, 288–308, 320–340, and 347–367; these read YKDLFGFVILLLALSILTLFS, LGGVLALLASILILMVVPLLH, LTQILFWTLVADVAILTWIGG, and FITVGQVASVLYFALFLILIP.

It belongs to the cytochrome b family. As to quaternary structure, the cytochrome bc1 complex contains 3 respiratory subunits (MT-CYB, CYC1 and UQCRFS1), 2 core proteins (UQCRC1 and UQCRC2) and probably 6 low-molecular weight proteins. Heme b serves as cofactor.

Its subcellular location is the mitochondrion inner membrane. Its function is as follows. Component of the ubiquinol-cytochrome c reductase complex (complex III or cytochrome b-c1 complex) that is part of the mitochondrial respiratory chain. The b-c1 complex mediates electron transfer from ubiquinol to cytochrome c. Contributes to the generation of a proton gradient across the mitochondrial membrane that is then used for ATP synthesis. The protein is Cytochrome b (mt-cyb) of Allocyttus niger (Black oreo dory).